A 452-amino-acid chain; its full sequence is 5'-nucleotidase domain-containing protein 1 (452 aa).

The active-site Nucleophile is D16. Mg(2+)-binding residues include D16 and D18. D18 functions as the Proton donor in the catalytic mechanism. K171 carries the N6-acetyllysine modification. D313 provides a ligand contact to Mg(2+). A compositionally biased stretch (basic and acidic residues) spans 339–361 (GDKDGKPEESEPEEKKGKYEGSK). Residues 339-365 (GDKDGKPEESEPEEKKGKYEGSKAKPL) are disordered.

The protein belongs to the 5'(3')-deoxyribonucleotidase family.

This chain is 5'-nucleotidase domain-containing protein 1 (NT5DC1), found in Bos taurus (Bovine).